Here is a 706-residue protein sequence, read N- to C-terminus: Polyribonucleotide nucleotidyltransferase (706 aa).

Aspartate 486 and aspartate 492 together coordinate Mg(2+). Residues proline 553–isoleucine 612 enclose the KH domain. In terms of domain architecture, S1 motif spans glycine 622–lysine 690.

This sequence belongs to the polyribonucleotide nucleotidyltransferase family. Component of the RNA degradosome, which is a multiprotein complex involved in RNA processing and mRNA degradation. The cofactor is Mg(2+).

Its subcellular location is the cytoplasm. It catalyses the reaction RNA(n+1) + phosphate = RNA(n) + a ribonucleoside 5'-diphosphate. In terms of biological role, involved in mRNA degradation. Catalyzes the phosphorolysis of single-stranded polyribonucleotides processively in the 3'- to 5'-direction. The sequence is that of Polyribonucleotide nucleotidyltransferase from Pectobacterium carotovorum subsp. carotovorum (strain PC1).